A 193-amino-acid polypeptide reads, in one-letter code: dCTP deaminase (193 aa).

DCTP-binding positions include 110-115 (RSSLAR), aspartate 128, 136-138 (VLE), tyrosine 171, lysine 178, and glutamine 182. The active-site Proton donor/acceptor is glutamate 138. Residues 168-193 (DRPYNRRQDAKYKNQQGAVSSRIDED) are disordered. Basic and acidic residues predominate over residues 170-179 (PYNRRQDAKY).

It belongs to the dCTP deaminase family. As to quaternary structure, homotrimer.

The catalysed reaction is dCTP + H2O + H(+) = dUTP + NH4(+). Its pathway is pyrimidine metabolism; dUMP biosynthesis; dUMP from dCTP (dUTP route): step 1/2. Catalyzes the deamination of dCTP to dUTP. The chain is dCTP deaminase from Photorhabdus laumondii subsp. laumondii (strain DSM 15139 / CIP 105565 / TT01) (Photorhabdus luminescens subsp. laumondii).